We begin with the raw amino-acid sequence, 219 residues long: UPF0502 protein Gura_3445 (219 aa).

The disordered stretch occupies residues 162–181 (AGEPDLPDDTPAPPPEPARQ).

This sequence belongs to the UPF0502 family.

The polypeptide is UPF0502 protein Gura_3445 (Geotalea uraniireducens (strain Rf4) (Geobacter uraniireducens)).